Consider the following 554-residue polypeptide: Eukaryotic translation initiation factor 3 subunit D-2 (554 aa).

The interval 116–149 (RGNAAIGGGQGGAGGTGGAGVGNKYGKGRDMRRG) is disordered. The span at 120–140 (AIGGGQGGAGGTGGAGVGNKY) shows a compositional bias: gly residues. The segment at 291–305 (QFDLLTVNETALEPP) is RNA gate. Residues 532 to 554 (FDSDGNDDEETSDDRPFLKSLGN) form a disordered region.

The protein belongs to the eIF-3 subunit D family. Component of the eukaryotic translation initiation factor 3 (eIF-3) complex. The eIF-3 complex interacts with pix.

Its subcellular location is the cytoplasm. In terms of biological role, mRNA cap-binding component of the eukaryotic translation initiation factor 3 (eIF-3) complex, which is involved in protein synthesis of a specialized repertoire of mRNAs and, together with other initiation factors, stimulates binding of mRNA and methionyl-tRNAi to the 40S ribosome. The eIF-3 complex specifically targets and initiates translation of a subset of mRNAs involved in cell proliferation. In the eIF-3 complex, eif3d specifically recognizes and binds the 7-methylguanosine cap of a subset of mRNAs. In Drosophila virilis (Fruit fly), this protein is Eukaryotic translation initiation factor 3 subunit D-2.